The chain runs to 323 residues: E3 ubiquitin-protein ligase makorin (323 aa).

C3H1-type zinc fingers lie at residues 1-28 (MSDRILCKFFVHGSCLKGENCEFSHDSK) and 29-56 (DPPNNVCTFYQKRICLYGSRCRYDHVRA). Low complexity predominate over residues 62–74 (LSSDSESLDRSIS). Residues 62-92 (LSSDSESLDRSISTTPSRHLQQQGDNNDGDK) form a disordered region. The segment covering 75–87 (TTPSRHLQQQGDN) has biased composition (polar residues). The segment at 101–128 (PREYPICSFAAAGDCPRGNQCPHMHGDL) adopts a C3H1-type 3 zinc-finger fold. The makorin-type Cys-His stretch occupies residues 129 to 158 (CNTCGKKCLHPFRPEEREEHTKECEKKQKH). An RING-type zinc finger spans residues 170–228 (CSVCLDRILSKATPGERKFGLLTECDHPFCIQCIRNWRSSAPVSGMDVNSTLRACPICR). The segment at 257-286 (KLRSIDCKHFNFGNGNCPFGASCFYKHAYS) adopts a C3H1-type 4 zinc-finger fold.

The catalysed reaction is S-ubiquitinyl-[E2 ubiquitin-conjugating enzyme]-L-cysteine + [acceptor protein]-L-lysine = [E2 ubiquitin-conjugating enzyme]-L-cysteine + N(6)-ubiquitinyl-[acceptor protein]-L-lysine.. It functions in the pathway protein modification; protein ubiquitination. In terms of biological role, E3 ubiquitin ligase catalyzing the covalent attachment of ubiquitin moieties onto substrate proteins. In Arabidopsis thaliana (Mouse-ear cress), this protein is E3 ubiquitin-protein ligase makorin (MKRN).